Reading from the N-terminus, the 446-residue chain is Exodeoxyribonuclease 7 large subunit (446 aa).

The protein belongs to the XseA family. As to quaternary structure, heterooligomer composed of large and small subunits.

Its subcellular location is the cytoplasm. It catalyses the reaction Exonucleolytic cleavage in either 5'- to 3'- or 3'- to 5'-direction to yield nucleoside 5'-phosphates.. Its function is as follows. Bidirectionally degrades single-stranded DNA into large acid-insoluble oligonucleotides, which are then degraded further into small acid-soluble oligonucleotides. The polypeptide is Exodeoxyribonuclease 7 large subunit (Streptococcus pyogenes serotype M6 (strain ATCC BAA-946 / MGAS10394)).